The following is a 115-amino-acid chain: U3-lycotoxin-Ls1l (115 aa).

Positions 1 to 20 are cleaved as a signal peptide; that stretch reads MKFVLLFGVLLVTLFSYSSA. Residues 21-44 constitute a propeptide that is removed on maturation; the sequence is EMLDDFDQADEDELLSLIEKEEAR. Intrachain disulfides connect C55/C72, C62/C87, and C74/C85.

It belongs to the neurotoxin 19 (CSTX) family. 01 subfamily. In terms of tissue distribution, expressed by the venom gland.

It is found in the secreted. In Lycosa singoriensis (Wolf spider), this protein is U3-lycotoxin-Ls1l.